The chain runs to 320 residues: NADH-ubiquinone oxidoreductase chain 1 (320 aa).

The next 8 membrane-spanning stretches (helical) occupy residues 3-23 (LITI…VAFL), 72-92 (ILLI…WTPI), 103-123 (LGFL…LWAG), 147-167 (VTLG…TMQL), 174-194 (HIWL…STLA), 226-246 (FFLA…ILFI), 255-275 (ELFL…FLWI), and 295-315 (FLPL…SISG).

It belongs to the complex I subunit 1 family.

It is found in the mitochondrion inner membrane. It catalyses the reaction a ubiquinone + NADH + 5 H(+)(in) = a ubiquinol + NAD(+) + 4 H(+)(out). Its function is as follows. Core subunit of the mitochondrial membrane respiratory chain NADH dehydrogenase (Complex I) that is believed to belong to the minimal assembly required for catalysis. Complex I functions in the transfer of electrons from NADH to the respiratory chain. The immediate electron acceptor for the enzyme is believed to be ubiquinone. This Varanus jobiensis (Peach throat monitor) protein is NADH-ubiquinone oxidoreductase chain 1 (MT-ND1).